We begin with the raw amino-acid sequence, 66 residues long: Large ribosomal subunit protein uL30 (66 aa).

The protein belongs to the universal ribosomal protein uL30 family. In terms of assembly, part of the 50S ribosomal subunit.

The polypeptide is Large ribosomal subunit protein uL30 (Brucella anthropi (strain ATCC 49188 / DSM 6882 / CCUG 24695 / JCM 21032 / LMG 3331 / NBRC 15819 / NCTC 12168 / Alc 37) (Ochrobactrum anthropi)).